Here is a 2475-residue protein sequence, read N- to C-terminus: Gellan lyase (2475 aa).

Residues 1–35 (MRFSWKKLVSAALVMALLVGIVYPAASGRGAVASA) form the signal peptide. The Fibronectin type-III domain occupies 623–708 (APANVQVAIS…QPATATSPGE (86 aa)). Residues 1295–1518 (GAFSLTIDDN…RDQIWVGRYG (224 aa)) enclose the NodB homology domain. The region spanning 2111 to 2223 (QPGQQLELTV…VSTAVSLSDF (113 aa)) is the Cohesin domain.

Post-translationally, subject to proteolytic processing after secretion. Cleavage occurs between Gly-1205 and Leu-1206. This gives rise to a N-terminal gellan lyase of 130 kDa being the mature form of the gellan lyase. The function of C-terminal gellan lyase is not known.

The protein resides in the secreted. The enzyme catalyses Eliminative cleavage of beta-D-glucopyranosyl-(1-&gt;4)-beta-D-glucopyranosyluronate bonds of gellan backbone releasing tetrasaccharides containing a 4-deoxy-4,5-unsaturated D-glucopyranosyluronic acid at the non-reducing end. The tetrasaccharide produced from deacetylated gellan is beta-D-4-deoxy-Delta(4)-GlcAp-(1-&gt;4)-beta-D-Glcp-(1-&gt;4)-alpha-L-Rhap-(1-&gt;3)-beta-D-Glcp.. In terms of biological role, cleaves the glycosidic bonds of gellan backbone and releases tetrasaccharide units of glucuronyl-glucosyl-rhamnosyl-glucose with unsaturated glucuronic acid at the non-reducing terminal. The enzyme is highly specific to the heteropolysaccharide gellan, especially deacetylated gellan. The chain is Gellan lyase from Bacillus sp.